Reading from the N-terminus, the 325-residue chain is HTH-type transcriptional regulator BbuR (325 aa).

Positions 15-72 constitute an HTH lysR-type domain; sequence LDTDLLNVFCWVAKTQSFSRAAAELGTSQPVITRKIGRLEECLGVALFVRSNRGCVLT. A DNA-binding region (H-T-H motif) is located at residues 32–51; the sequence is FSRAAAELGTSQPVITRKIG.

This sequence belongs to the LysR transcriptional regulatory family.

This is HTH-type transcriptional regulator BbuR (bbuR) from Bordetella bronchiseptica (strain ATCC BAA-588 / NCTC 13252 / RB50) (Alcaligenes bronchisepticus).